Consider the following 326-residue polypeptide: MIERIWSGSSLVYLLLLPLSWLYGLVSGLIRLSYRCGLRKSWRAPVPVVVVGNLTAGGNGKTPMVIWLVEQLQQRGYRVGVVSRGYGGKAEAYPLLLNAGTTTQQAGDEPVLIYQRTAAPVAISPKRSEAVQALLKQQPLDVVITDDGLQHYALQRDFELVVIDGVRRFGNGWWLPAGPMRERASRLNSVDALIANGGVAQPGEIAMRLQARDAVNVASGERRPAVELPHVVAMAGIGHPPRFFATLEKLGVAVEKEVAFADHQEYQHGPLAALVSSEQTLLMTEKDAVKCRAFAQPNWWYLPVDAVLPPDQAEQLLHNIEALLTK.

55–62 (TAGGNGKT) lines the ATP pocket.

The protein belongs to the LpxK family.

It carries out the reaction a lipid A disaccharide + ATP = a lipid IVA + ADP + H(+). Its pathway is glycolipid biosynthesis; lipid IV(A) biosynthesis; lipid IV(A) from (3R)-3-hydroxytetradecanoyl-[acyl-carrier-protein] and UDP-N-acetyl-alpha-D-glucosamine: step 6/6. Functionally, transfers the gamma-phosphate of ATP to the 4'-position of a tetraacyldisaccharide 1-phosphate intermediate (termed DS-1-P) to form tetraacyldisaccharide 1,4'-bis-phosphate (lipid IVA). The protein is Tetraacyldisaccharide 4'-kinase of Serratia proteamaculans (strain 568).